The sequence spans 39 residues: Photosystem II reaction center protein J (39 aa).

The helical transmembrane segment at 7–27 threads the bilayer; the sequence is IPLWLIATVGGTAALTVVGLF.

This sequence belongs to the PsbJ family. In terms of assembly, PSII is composed of 1 copy each of membrane proteins PsbA, PsbB, PsbC, PsbD, PsbE, PsbF, PsbH, PsbI, PsbJ, PsbK, PsbL, PsbM, PsbT, PsbX, PsbY, PsbZ, Psb30/Ycf12, at least 3 peripheral proteins of the oxygen-evolving complex and a large number of cofactors. It forms dimeric complexes.

It is found in the plastid. It localises to the chloroplast thylakoid membrane. Its function is as follows. One of the components of the core complex of photosystem II (PSII). PSII is a light-driven water:plastoquinone oxidoreductase that uses light energy to abstract electrons from H(2)O, generating O(2) and a proton gradient subsequently used for ATP formation. It consists of a core antenna complex that captures photons, and an electron transfer chain that converts photonic excitation into a charge separation. The polypeptide is Photosystem II reaction center protein J (Rhodomonas salina (Cryptomonas salina)).